Consider the following 873-residue polypeptide: Outer membrane usher protein FimC (873 aa).

An N-terminal signal peptide occupies residues 1 to 15; sequence MKQIPLILAMSLAFA. Residues cysteine 815 and cysteine 838 are joined by a disulfide bond.

Belongs to the fimbrial export usher family.

It localises to the cell outer membrane. Its function is as follows. Probable porin-like protein necessary for the assembly of a pilin-type protein. This is Outer membrane usher protein FimC (fimC) from Bordetella pertussis (strain Tohama I / ATCC BAA-589 / NCTC 13251).